The chain runs to 178 residues: Cytochrome b6-f complex iron-sulfur subunit (178 aa).

A helical membrane pass occupies residues 20–42 (LLTFGTATGVALGALYPVANYFM). One can recognise a Rieske domain in the interval 65–161 (KTGWLATHQA…VDIEDDAVLV (97 aa)). Cys-107, His-109, Cys-125, and His-128 together coordinate [2Fe-2S] cluster. Cys-112 and Cys-127 form a disulfide bridge.

This sequence belongs to the Rieske iron-sulfur protein family. The 4 large subunits of the cytochrome b6-f complex are cytochrome b6, subunit IV (17 kDa polypeptide, PetD), cytochrome f and the Rieske protein, while the 4 small subunits are PetG, PetL, PetM and PetN. The complex functions as a dimer. Requires [2Fe-2S] cluster as cofactor.

It is found in the cellular thylakoid membrane. It catalyses the reaction 2 oxidized [plastocyanin] + a plastoquinol + 2 H(+)(in) = 2 reduced [plastocyanin] + a plastoquinone + 4 H(+)(out). Its function is as follows. Component of the cytochrome b6-f complex, which mediates electron transfer between photosystem II (PSII) and photosystem I (PSI), cyclic electron flow around PSI, and state transitions. This chain is Cytochrome b6-f complex iron-sulfur subunit, found in Prochlorococcus marinus (strain MIT 9312).